Consider the following 417-residue polypeptide: UDP-N-acetylglucosamine 1-carboxyvinyltransferase (417 aa).

Residue 22-23 (KN) coordinates phosphoenolpyruvate. Residue arginine 93 participates in UDP-N-acetyl-alpha-D-glucosamine binding. Catalysis depends on cysteine 117, which acts as the Proton donor. Position 117 is a 2-(S-cysteinyl)pyruvic acid O-phosphothioketal (cysteine 117). UDP-N-acetyl-alpha-D-glucosamine is bound by residues 122–126 (RPVDL), aspartate 305, and isoleucine 327.

The protein belongs to the EPSP synthase family. MurA subfamily.

It is found in the cytoplasm. It catalyses the reaction phosphoenolpyruvate + UDP-N-acetyl-alpha-D-glucosamine = UDP-N-acetyl-3-O-(1-carboxyvinyl)-alpha-D-glucosamine + phosphate. The protein operates within cell wall biogenesis; peptidoglycan biosynthesis. Cell wall formation. Adds enolpyruvyl to UDP-N-acetylglucosamine. The polypeptide is UDP-N-acetylglucosamine 1-carboxyvinyltransferase (Thiobacillus denitrificans (strain ATCC 25259 / T1)).